Reading from the N-terminus, the 234-residue chain is Lactate utilization protein C 1 (234 aa).

The protein belongs to the LutC/YkgG family.

Its function is as follows. Is involved in L-lactate degradation and allows cells to grow with lactate as the sole carbon source. This is Lactate utilization protein C 1 from Bacillus mycoides (strain KBAB4) (Bacillus weihenstephanensis).